The sequence spans 362 residues: Chorismate synthase (362 aa).

NADP(+)-binding residues include R48 and R54. Residues 131 to 133 (RSS), 243 to 244 (NA), G287, 302 to 306 (KPTSS), and R328 contribute to the FMN site.

The protein belongs to the chorismate synthase family. As to quaternary structure, homotetramer. The cofactor is FMNH2.

The catalysed reaction is 5-O-(1-carboxyvinyl)-3-phosphoshikimate = chorismate + phosphate. Its pathway is metabolic intermediate biosynthesis; chorismate biosynthesis; chorismate from D-erythrose 4-phosphate and phosphoenolpyruvate: step 7/7. Its function is as follows. Catalyzes the anti-1,4-elimination of the C-3 phosphate and the C-6 proR hydrogen from 5-enolpyruvylshikimate-3-phosphate (EPSP) to yield chorismate, which is the branch point compound that serves as the starting substrate for the three terminal pathways of aromatic amino acid biosynthesis. This reaction introduces a second double bond into the aromatic ring system. This is Chorismate synthase from Rhodopseudomonas palustris (strain BisB18).